The following is a 61-amino-acid chain: Small ribosomal subunit protein eS31 (61 aa).

Cys22, Cys25, Cys38, and Cys41 together coordinate Zn(2+). The C4-type zinc finger occupies 22-41 (CPRCGSFMAEHKDRYHCGKC).

Belongs to the eukaryotic ribosomal protein eS31 family. As to quaternary structure, part of the 30S ribosomal subunit. Zn(2+) is required as a cofactor.

In Nanoarchaeum equitans (strain Kin4-M), this protein is Small ribosomal subunit protein eS31.